The following is an 872-amino-acid chain: Alanine--tRNA ligase (872 aa).

Residues His563, His567, Cys665, and His669 each contribute to the Zn(2+) site.

This sequence belongs to the class-II aminoacyl-tRNA synthetase family. Zn(2+) is required as a cofactor.

Its subcellular location is the cytoplasm. It catalyses the reaction tRNA(Ala) + L-alanine + ATP = L-alanyl-tRNA(Ala) + AMP + diphosphate. Catalyzes the attachment of alanine to tRNA(Ala) in a two-step reaction: alanine is first activated by ATP to form Ala-AMP and then transferred to the acceptor end of tRNA(Ala). Also edits incorrectly charged Ser-tRNA(Ala) and Gly-tRNA(Ala) via its editing domain. The polypeptide is Alanine--tRNA ligase (Bacteroides fragilis (strain ATCC 25285 / DSM 2151 / CCUG 4856 / JCM 11019 / LMG 10263 / NCTC 9343 / Onslow / VPI 2553 / EN-2)).